The chain runs to 550 residues: Beta-fructofuranosidase, insoluble isoenzyme CWINV6 (550 aa).

Substrate-binding positions include 28–31 (WLND), glutamine 47, 92–93 (WS), 157–158 (RD), and glutamate 214. The active site involves aspartate 31. N-linked (GlcNAc...) asparagine glycosylation is found at asparagine 235 and asparagine 272.

It belongs to the glycosyl hydrolase 32 family. In terms of tissue distribution, expressed in seedlings and leaves, and, to a lower extent, in flowers and seeds.

The protein localises to the secreted. It is found in the extracellular space. The protein resides in the apoplast. It localises to the cell wall. The catalysed reaction is Hydrolysis of terminal, non-reducing (2-&gt;1)- and (2-&gt;6)-linked beta-D-fructofuranose residues in fructans.. Functionally, 6 and 1-fructan exohydrolase that can degrade both inulin and levan-type fructans, such as phlein, levan, neokestose, levanbiose, 6-kestose, 1-kestose, inulin, and 1,1-nystose. This is Beta-fructofuranosidase, insoluble isoenzyme CWINV6 (CWINV6) from Arabidopsis thaliana (Mouse-ear cress).